The chain runs to 657 residues: PAN2-PAN3 deadenylation complex subunit PAN3 (657 aa).

Disordered regions lie at residues methionine 1–aspartate 29, histidine 52–isoleucine 98, and serine 115–isoleucine 135. The C3H1-type zinc finger occupies alanine 27–serine 55. Positions histidine 52–serine 67 are enriched in basic and acidic residues. Polar residues-rich tracts occupy residues aspartate 75–isoleucine 98 and serine 115–glutamate 132. Positions glutamine 259 to serine 521 are pseudokinase domain. ATP-binding positions include arginine 311, aspartate 360 to threonine 367, and serine 421 to lysine 422. The stretch at serine 522 to phenylalanine 560 forms a coiled coil. The interval isoleucine 561–isoleucine 657 is knob domain.

The protein belongs to the protein kinase superfamily. PAN3 family. As to quaternary structure, homodimer. Forms a heterotrimer with a catalytic subunit PAN2 to form the poly(A)-nuclease (PAN) deadenylation complex. Interacts (via PAM-2 motif) with poly(A)-binding protein PAB1 (via PABC domain), conferring substrate specificity of the enzyme complex.

Its subcellular location is the cytoplasm. Regulatory subunit of the poly(A)-nuclease (PAN) deadenylation complex, one of two cytoplasmic mRNA deadenylases involved in mRNA turnover. PAN specifically shortens poly(A) tails of RNA and the activity is stimulated by poly(A)-binding protein PAB1. PAN deadenylation is followed by rapid degradation of the shortened mRNA tails by the CCR4-NOT complex. Deadenylated mRNAs are then degraded by two alternative mechanisms, namely exosome-mediated 3'-5' exonucleolytic degradation, or deadenylation-dependent mRNA decaping and subsequent 5'-3' exonucleolytic degradation by XRN1. May also be involved in post-transcriptional maturation of mRNA poly(A) tails. PAN3 acts as a positive regulator for PAN activity, recruiting the catalytic subunit PAN2 to mRNA via its interaction with RNA and with PAB1. In Coccidioides immitis (strain RS) (Valley fever fungus), this protein is PAN2-PAN3 deadenylation complex subunit PAN3.